Here is a 372-residue protein sequence, read N- to C-terminus: MKKKDYYEVLGVSKTASEQEIRQAYRKLAKQYHPDLNKSPDAHDKMVEINEAADVLLDKDKRKQYDQFGHNAFDGSSGFSSNFADFEDLFSNMGSSGFSSFTNIFSDFFGSNKSDYQRSTKGQSVSVDIYLTFKELLFGVDKIIELDLLTNCSVCFGSGAESNSDISICNNCHGTGEVLIQKNMGFFQFQQSAKCNVCNGAGKIIKNKCKNCKGKGKYLERKKIEVNIPKGIRPNQQIKLSQKGHASINNGVNGDLIIDIYLKESKVFEIVNNNDILMTYNISYLDAILGNEIIIKTLDGDIKYKLPKSINSNEFIIINNKGLYKSINKDKRGDLIIKVNIVVPKNLNKKEKELIEQIYEQTSFNPENNIDQ.

The J domain occupies 5-69 (DYYEVLGVSK…DKRKQYDQFG (65 aa)). The CR-type zinc finger occupies 139–221 (GVDKIIELDL…CKGKGKYLER (83 aa)). Positions 152, 155, 169, 172, 195, 198, 209, and 212 each coordinate Zn(2+). CXXCXGXG motif repeat units follow at residues 152–159 (CSVCFGSG), 169–176 (CNNCHGTG), 195–202 (CNVCNGAG), and 209–216 (CKNCKGKG).

It belongs to the DnaJ family. As to quaternary structure, homodimer. It depends on Zn(2+) as a cofactor.

It is found in the cytoplasm. Functionally, participates actively in the response to hyperosmotic and heat shock by preventing the aggregation of stress-denatured proteins and by disaggregating proteins, also in an autonomous, DnaK-independent fashion. Unfolded proteins bind initially to DnaJ; upon interaction with the DnaJ-bound protein, DnaK hydrolyzes its bound ATP, resulting in the formation of a stable complex. GrpE releases ADP from DnaK; ATP binding to DnaK triggers the release of the substrate protein, thus completing the reaction cycle. Several rounds of ATP-dependent interactions between DnaJ, DnaK and GrpE are required for fully efficient folding. Also involved, together with DnaK and GrpE, in the DNA replication of plasmids through activation of initiation proteins. The polypeptide is Chaperone protein DnaJ (Mycoplasma mycoides subsp. mycoides SC (strain CCUG 32753 / NCTC 10114 / PG1)).